A 127-amino-acid chain; its full sequence is Large ribosomal subunit protein bL21 (127 aa).

This sequence belongs to the bacterial ribosomal protein bL21 family. As to quaternary structure, part of the 50S ribosomal subunit. Contacts protein L20.

Its function is as follows. This protein binds to 23S rRNA in the presence of protein L20. The polypeptide is Large ribosomal subunit protein bL21 (Blochmanniella floridana).